The primary structure comprises 275 residues: Large ribosomal subunit protein uL2 (275 aa).

The segment at 223–275 is disordered; that stretch reads VAMNPIDHPHGGGEGRTSGGRHPVSPWGVPTKGYKTRSNKRTDKYIVRRRNKK.

This sequence belongs to the universal ribosomal protein uL2 family. As to quaternary structure, part of the 50S ribosomal subunit. Forms a bridge to the 30S subunit in the 70S ribosome.

Functionally, one of the primary rRNA binding proteins. Required for association of the 30S and 50S subunits to form the 70S ribosome, for tRNA binding and peptide bond formation. It has been suggested to have peptidyltransferase activity; this is somewhat controversial. Makes several contacts with the 16S rRNA in the 70S ribosome. The sequence is that of Large ribosomal subunit protein uL2 from Shewanella woodyi (strain ATCC 51908 / MS32).